Consider the following 87-residue polypeptide: Sec-independent protein translocase protein TatA (87 aa).

The helical transmembrane segment at 1–21 (MGSFSITHWLILLVVVVVVFG) threads the bilayer. The tract at residues 56 to 87 (VLDHDAGTNPPNITGTQSDTTSANKVDDTHNV) is disordered. Positions 64–79 (NPPNITGTQSDTTSAN) are enriched in polar residues.

This sequence belongs to the TatA/E family. In terms of assembly, the Tat system comprises two distinct complexes: a TatABC complex, containing multiple copies of TatA, TatB and TatC subunits, and a separate TatA complex, containing only TatA subunits. Substrates initially bind to the TatABC complex, which probably triggers association of the separate TatA complex to form the active translocon.

Its subcellular location is the cell inner membrane. Functionally, part of the twin-arginine translocation (Tat) system that transports large folded proteins containing a characteristic twin-arginine motif in their signal peptide across membranes. TatA could form the protein-conducting channel of the Tat system. This chain is Sec-independent protein translocase protein TatA, found in Psychrobacter arcticus (strain DSM 17307 / VKM B-2377 / 273-4).